The chain runs to 226 residues: Uracil-DNA glycosylase (226 aa).

Aspartate 64 functions as the Proton acceptor in the catalytic mechanism.

This sequence belongs to the uracil-DNA glycosylase (UDG) superfamily. UNG family.

The protein localises to the cytoplasm. It carries out the reaction Hydrolyzes single-stranded DNA or mismatched double-stranded DNA and polynucleotides, releasing free uracil.. Excises uracil residues from the DNA which can arise as a result of misincorporation of dUMP residues by DNA polymerase or due to deamination of cytosine. The sequence is that of Uracil-DNA glycosylase from Vibrio parahaemolyticus serotype O3:K6 (strain RIMD 2210633).